Here is a 187-residue protein sequence, read N- to C-terminus: Ribosome-recycling factor (187 aa).

It belongs to the RRF family.

The protein resides in the cytoplasm. In terms of biological role, responsible for the release of ribosomes from messenger RNA at the termination of protein biosynthesis. May increase the efficiency of translation by recycling ribosomes from one round of translation to another. This chain is Ribosome-recycling factor, found in Petrotoga mobilis (strain DSM 10674 / SJ95).